The chain runs to 190 residues: Large ribosomal subunit protein bL9 (190 aa).

It belongs to the bacterial ribosomal protein bL9 family.

In terms of biological role, binds to the 23S rRNA. This Methylorubrum populi (strain ATCC BAA-705 / NCIMB 13946 / BJ001) (Methylobacterium populi) protein is Large ribosomal subunit protein bL9.